A 201-amino-acid polypeptide reads, in one-letter code: Receptor expression-enhancing protein 1 (201 aa).

2 helical membrane-spanning segments follow: residues 1–21 (MVSW…YPAY) and 35–55 (YVKW…ETFT). Residue S152 is modified to Phosphoserine. The disordered stretch occupies residues 158–201 (TIRGDGAPAPSGPPPPGTGRSSGKHSQPKMSRSASESAGSSGTA). Over residues 188–201 (SRSASESAGSSGTA) the composition is skewed to low complexity.

This sequence belongs to the DP1 family. As to quaternary structure, interacts with OLFR992. Interacts with SPAST and ATL1. Interacts (via C-terminus) with microtubules. Interacts with ZFYVE27. As to expression, detected in olfactory sensory neurons of the olfactory epithelium, and in total brain.

The protein resides in the membrane. It is found in the mitochondrion membrane. It localises to the endoplasmic reticulum. Its function is as follows. Required for endoplasmic reticulum (ER) network formation, shaping and remodeling; it links ER tubules to the cytoskeleton. May also enhance the cell surface expression of odorant receptors. The polypeptide is Receptor expression-enhancing protein 1 (Reep1) (Mus musculus (Mouse)).